The primary structure comprises 437 residues: 3-phosphoshikimate 1-carboxyvinyltransferase (437 aa).

The 3-phosphoshikimate site is built by Lys28, Ser29, and Arg33. Position 28 (Lys28) interacts with phosphoenolpyruvate. Phosphoenolpyruvate is bound by residues Gly97 and Arg125. 3-phosphoshikimate contacts are provided by Ser168, Ser169, Gln170, Glu316, and His343. Gln170 contributes to the phosphoenolpyruvate binding site. Glu316 serves as the catalytic Proton acceptor. The phosphoenolpyruvate site is built by Arg347, Arg388, and Lys413.

The protein belongs to the EPSP synthase family. In terms of assembly, monomer.

The protein resides in the cytoplasm. The enzyme catalyses 3-phosphoshikimate + phosphoenolpyruvate = 5-O-(1-carboxyvinyl)-3-phosphoshikimate + phosphate. It participates in metabolic intermediate biosynthesis; chorismate biosynthesis; chorismate from D-erythrose 4-phosphate and phosphoenolpyruvate: step 6/7. Functionally, catalyzes the transfer of the enolpyruvyl moiety of phosphoenolpyruvate (PEP) to the 5-hydroxyl of shikimate-3-phosphate (S3P) to produce enolpyruvyl shikimate-3-phosphate and inorganic phosphate. The polypeptide is 3-phosphoshikimate 1-carboxyvinyltransferase (Rhodococcus erythropolis (strain PR4 / NBRC 100887)).